Reading from the N-terminus, the 1940-residue chain is Myosin-3 (1940 aa).

Positions 33 to 82 (DAKTYCFVVDSKEEYAKGKIKSSQDGKVTVETEDNRTLVVKPEDVYAMNP) constitute a Myosin N-terminal SH3-like domain. The Myosin motor domain maps to 86 to 779 (DKIEDMAMLT…LLGTLEEMRD (694 aa)). K130 carries the post-translational modification N6,N6,N6-trimethyllysine. 179–186 (GESGAGKT) is an ATP binding site. Actin-binding regions lie at residues 656-678 (LNKL…IPNE) and 758-772 (KFGH…GLLG). An IQ domain is found at 782-811 (LAKLITRTQAVCRGFLMRVEFQKMMQRRES). Positions 840 to 1933 (LLKSAETEKE…KTRDFTSSRM (1094 aa)) form a coiled coil. Residues 1260–1289 (ARGKNEETQRSLSELTTQKSRLQTEAGELS) are disordered. Residues 1269–1282 (RSLSELTTQKSRLQ) are compositionally biased toward polar residues.

The protein belongs to the TRAFAC class myosin-kinesin ATPase superfamily. Myosin family. Muscle myosin is a hexameric protein that consists of 2 heavy chain subunits (MHC), 2 alkali light chain subunits (MLC) and 2 regulatory light chain subunits (MLC-2).

Its subcellular location is the cytoplasm. It localises to the myofibril. In terms of biological role, muscle contraction. The chain is Myosin-3 (Myh3) from Rattus norvegicus (Rat).